Reading from the N-terminus, the 193-residue chain is Ribosomal RNA small subunit methyltransferase G (193 aa).

S-adenosyl-L-methionine-binding positions include Gly-61, Leu-66, 112-113, and Arg-126; that span reads IE.

It belongs to the methyltransferase superfamily. RNA methyltransferase RsmG family.

It is found in the cytoplasm. The catalysed reaction is guanosine(527) in 16S rRNA + S-adenosyl-L-methionine = N(7)-methylguanosine(527) in 16S rRNA + S-adenosyl-L-homocysteine. Functionally, specifically methylates the N7 position of guanine in position 527 of 16S rRNA. This chain is Ribosomal RNA small subunit methyltransferase G, found in Paracoccus denitrificans (strain Pd 1222).